A 238-amino-acid chain; its full sequence is Zinc finger protein ZAT6 (238 aa).

Positions 1–15 are enriched in polar residues; the sequence is MALETLTSPRLSSPM. A disordered region spans residues 1–42; that stretch reads MALETLTSPRLSSPMPTLFQDSALGFHGSKGKRSKRSRSEFD. The Nuclear localization signal signature appears at 30 to 38; the sequence is KGKRSKRSR. 2 C2H2-type zinc fingers span residues 89-111 and 148-170; these read YKCS…KASH and HVCS…KRCH. Residues 175-202 are disordered; sequence NGGGVSSSVSNSEDVGSTSHVSSGHRGF. Low complexity predominate over residues 180–193; the sequence is SSSVSNSEDVGSTS.

It localises to the nucleus. Probable transcription factor that regulates root development and phosphate (Pi) acquisition and homeostasis. Probably acts as a repressor of primary root growth and regulates Pi homeostasis through the control of root architecture. This is Zinc finger protein ZAT6 (ZAT6) from Arabidopsis thaliana (Mouse-ear cress).